The following is a 140-amino-acid chain: Large ribosomal subunit protein uL16 (140 aa).

It belongs to the universal ribosomal protein uL16 family. Part of the 50S ribosomal subunit.

Binds 23S rRNA and is also seen to make contacts with the A and possibly P site tRNAs. This Geotalea uraniireducens (strain Rf4) (Geobacter uraniireducens) protein is Large ribosomal subunit protein uL16.